The following is a 226-amino-acid chain: PKHD-type hydroxylase Sfri_0612 (226 aa).

A Fe2OG dioxygenase domain is found at 77 to 177; the sequence is KIFPPCFNRY…RIAAITWMQS (101 aa). Residues His-95, Asp-97, and His-158 each contribute to the Fe cation site. Position 168 (Arg-168) interacts with 2-oxoglutarate.

It depends on Fe(2+) as a cofactor. The cofactor is L-ascorbate.

This Shewanella frigidimarina (strain NCIMB 400) protein is PKHD-type hydroxylase Sfri_0612.